A 61-amino-acid polypeptide reads, in one-letter code: Metallothionein-1F (61 aa).

At methionine 1 the chain carries N-acetylmethionine. Residues 1-29 (MDPNCSCPTGGSCTCAGSCTCKACRCTSC) are beta. Cysteine 5, cysteine 7, cysteine 13, cysteine 15, cysteine 19, cysteine 21, cysteine 24, cysteine 26, cysteine 29, cysteine 33, cysteine 34, cysteine 36, cysteine 37, cysteine 41, cysteine 44, cysteine 48, cysteine 50, and cysteine 57 together coordinate a divalent metal cation. An alpha region spans residues 30–61 (KKSCCSCCPAGCAKCAQGCICKGASDKCSCCA). Position 58 is a phosphoserine (serine 58). A divalent metal cation contacts are provided by cysteine 59 and cysteine 60.

This sequence belongs to the metallothionein superfamily. Type 1 family. In terms of assembly, monomer.

Metallothioneins have a high content of cysteine residues that bind various heavy metals; these proteins are transcriptionally regulated by both heavy metals and glucocorticoids. The sequence is that of Metallothionein-1F (MT1F) from Sus scrofa (Pig).